The sequence spans 1710 residues: Chromodomain-helicase-DNA-binding protein 1 (1710 aa).

Residues methionine 1–valine 10 are compositionally biased toward basic and acidic residues. Residues methionine 1–serine 252 form a disordered region. Low complexity predominate over residues serine 35–glutamate 63. Positions aspartate 67–glutamate 85 are enriched in basic and acidic residues. Over residues glutamine 105 to glycine 121 the composition is skewed to low complexity. Acidic residues predominate over residues serine 122–serine 136. Residues serine 152–aspartate 163 are compositionally biased toward low complexity. Residues lysine 187 to lysine 210 show a composition bias toward basic residues. Phosphoserine is present on residues serine 215 and serine 216. Residues serine 215–aspartate 226 are compositionally biased toward acidic residues. Phosphothreonine is present on threonine 237. Residue serine 241 is modified to Phosphoserine. Residue threonine 250 is modified to Phosphothreonine. Position 252 is a phosphoserine (serine 252). Chromo domains follow at residues glutamate 272–lysine 364 and glutamine 389–lysine 452. Position 471 is a phosphoserine (serine 471). Positions alanine 493 to glutamate 663 constitute a Helicase ATP-binding domain. Aspartate 506–threonine 513 provides a ligand contact to ATP. Residues aspartate 614–histidine 617 carry the DEAH box motif. Residues leucine 792–threonine 943 enclose the Helicase C-terminal domain. A phosphoserine mark is found at serine 1025, serine 1040, serine 1081, serine 1085, serine 1096, serine 1098, serine 1100, and serine 1102. The interval isoleucine 1080–arginine 1120 is disordered. Positions arginine 1108–threonine 1117 are enriched in basic residues. Serine 1161 carries the post-translational modification Phosphoserine. Disordered regions lie at residues glutamate 1321–glutamate 1408 and lysine 1502–threonine 1710. A compositionally biased stretch (basic residues) spans serine 1329–isoleucine 1345. Residues serine 1353, serine 1355, serine 1356, serine 1360, serine 1363, serine 1371, and serine 1373 each carry the phosphoserine modification. The segment covering leucine 1370–glutamate 1379 has biased composition (basic and acidic residues). A CHD1 helical C-terminal domain (CHCT) region spans residues leucine 1409–serine 1511. Residues serine 1507–asparagine 1516 show a composition bias toward low complexity. Composition is skewed to basic and acidic residues over residues arginine 1523–lysine 1573 and glycine 1582–alanine 1670. A Phosphoserine modification is found at serine 1622. Tandem repeats lie at residues histidine 1628–arginine 1632, histidine 1634–arginine 1638, and histidine 1640–arginine 1644. The tract at residues histidine 1628–arginine 1644 is 3 X 5 AA repeats of H-S-D-H-R. Residues serine 1677, arginine 1688, and serine 1689 each carry the phosphoserine modification. Positions proline 1690–proline 1701 are enriched in basic and acidic residues.

Belongs to the SNF2/RAD54 helicase family. As to quaternary structure, component of the SAGA complex. Interacts with BCLAF1, NCoR, SRP20 and SAFB. Specifically interacts with methylated H3K4me2 and H3K4me3. Interacts with the FACT complex, the PAF complex and the U2 snRNP. Interacts directly with PAF1, SFA3A1, SFA3A2, SFA3A3, SNF2 and SSRP1. Expressed in many tissues including in the brain, where the highest level of expression is found in the cerebellum and basal ganglia.

It is found in the nucleus. The protein resides in the cytoplasm. The enzyme catalyses ATP + H2O = ADP + phosphate + H(+). ATP-dependent chromatin-remodeling factor which functions as substrate recognition component of the transcription regulatory histone acetylation (HAT) complex SAGA. Regulates polymerase II transcription. Also required for efficient transcription by RNA polymerase I, and more specifically the polymerase I transcription termination step. Regulates negatively DNA replication. Not only involved in transcription-related chromatin-remodeling, but also required to maintain a specific chromatin configuration across the genome. Is also associated with histone deacetylase (HDAC) activity. Required for the bridging of SNF2, the FACT complex, the PAF complex as well as the U2 snRNP complex to H3K4me3. Functions to modulate the efficiency of pre-mRNA splicing in part through physical bridging of spliceosomal components to H3K4me3. Required for maintaining open chromatin and pluripotency in embryonic stem cells. This chain is Chromodomain-helicase-DNA-binding protein 1, found in Homo sapiens (Human).